The chain runs to 56 residues: UPF0391 membrane protein Jann_3570 (56 aa).

A run of 2 helical transmembrane segments spans residues 4–24 and 29–48; these read WAVT…GGIA and GIAQ…SLVA.

It belongs to the UPF0391 family.

It is found in the cell membrane. The sequence is that of UPF0391 membrane protein Jann_3570 from Jannaschia sp. (strain CCS1).